A 991-amino-acid chain; its full sequence is Ribonuclease TUDOR 1 (991 aa).

A2 is subject to N-acetylalanine. TNase-like domains lie at 8–151, 186–364, 378–557, and 587–714; these read QWLK…RWSK, KPME…MWAN, QNFT…IHSA, and RRIP…IWEN. The tract at residues 227–250 is disordered; sequence RTTNGSVVETVPDEPNGDVSAESR. Positions 782 to 847 constitute a Tudor domain; the sequence is NPKRGDIVLA…RPIDPSVSAA (66 aa). Residue Y970 is modified to Phosphotyrosine. The segment at 971–991 is disordered; it reads GDIESDDEDTGPARKPAGGRR. Residue S975 is modified to Phosphoserine. T980 is modified (phosphothreonine).

As to expression, expressed in seeds, leaves, flowers, roots and siliques (at protein level). Accumulates in the cap and elongation zone of the root apices (at protein level).

Its subcellular location is the cytoplasm. The protein localises to the cytoplasmic granule. It localises to the perinuclear region. It is found in the endoplasmic reticulum. With respect to regulation, repressed by the specific inhibitor 3',5'-deoxythymidine bisphosphate (pdTp); this RNase activity inhibition impairs subcellular relocation upon abiotic stress and leads to reduced stress resistance. In terms of biological role, cytoprotective ribonuclease (RNase) required for resistance to abiotic stresses, acting as a positive regulator of mRNA decapping during stress. Essential for the integrity and function of cytoplasmic messenger ribonucleoprotein (mRNP) complexes called stress granules (SGs) and processing bodies (PBs), sites of post-transcriptional gene regulation during stress (e.g. salt and heat). Involved in gibberellic acid (GA) biosynthesis. Essential for stress tolerance, probably by regulating mRNAs entering the secretory pathway. Component of stress granules (SGs) that regulates growth under salt stress by modulating levels of GA20OX3 mRNA. Binds GA20OX3 mRNA. May inhibit the degradation of mRNAs involved in stress adaptation. This Arabidopsis thaliana (Mouse-ear cress) protein is Ribonuclease TUDOR 1.